The chain runs to 312 residues: DNA-directed RNA polymerase subunit alpha (312 aa).

An alpha N-terminal domain (alpha-NTD) region spans residues methionine 1–serine 226. The segment at threonine 243 to lysine 312 is alpha C-terminal domain (alpha-CTD).

The protein belongs to the RNA polymerase alpha chain family. Homodimer. The RNAP catalytic core consists of 2 alpha, 1 beta, 1 beta' and 1 omega subunit. When a sigma factor is associated with the core the holoenzyme is formed, which can initiate transcription.

The catalysed reaction is RNA(n) + a ribonucleoside 5'-triphosphate = RNA(n+1) + diphosphate. Its function is as follows. DNA-dependent RNA polymerase catalyzes the transcription of DNA into RNA using the four ribonucleoside triphosphates as substrates. The polypeptide is DNA-directed RNA polymerase subunit alpha (Lactococcus lactis subsp. cremoris (strain MG1363)).